The chain runs to 347 residues: N-acetyl-gamma-glutamyl-phosphate reductase (347 aa).

The active site involves C152.

This sequence belongs to the NAGSA dehydrogenase family. Type 1 subfamily.

It is found in the cytoplasm. The catalysed reaction is N-acetyl-L-glutamate 5-semialdehyde + phosphate + NADP(+) = N-acetyl-L-glutamyl 5-phosphate + NADPH + H(+). The protein operates within amino-acid biosynthesis; L-arginine biosynthesis; N(2)-acetyl-L-ornithine from L-glutamate: step 3/4. Functionally, catalyzes the NADPH-dependent reduction of N-acetyl-5-glutamyl phosphate to yield N-acetyl-L-glutamate 5-semialdehyde. The polypeptide is N-acetyl-gamma-glutamyl-phosphate reductase (Neisseria gonorrhoeae (strain NCCP11945)).